Consider the following 38-residue polypeptide: Photosystem II reaction center protein L (38 aa).

A helical transmembrane segment spans residues 17 to 37 (SLYWGLLLIFVLAVSFSNYFF).

The protein belongs to the PsbL family. As to quaternary structure, PSII is composed of 1 copy each of membrane proteins PsbA, PsbB, PsbC, PsbD, PsbE, PsbF, PsbH, PsbI, PsbJ, PsbK, PsbL, PsbM, PsbT, PsbX, PsbY, PsbZ, Psb30/Ycf12, at least 3 peripheral proteins of the oxygen-evolving complex and a large number of cofactors. It forms dimeric complexes.

Its subcellular location is the plastid. It is found in the chloroplast thylakoid membrane. Its function is as follows. One of the components of the core complex of photosystem II (PSII). PSII is a light-driven water:plastoquinone oxidoreductase that uses light energy to abstract electrons from H(2)O, generating O(2) and a proton gradient subsequently used for ATP formation. It consists of a core antenna complex that captures photons, and an electron transfer chain that converts photonic excitation into a charge separation. This subunit is found at the monomer-monomer interface and is required for correct PSII assembly and/or dimerization. The chain is Photosystem II reaction center protein L from Amborella trichopoda.